The primary structure comprises 326 residues: DNA-directed RNA polymerase subunit alpha (326 aa).

The interval 1-232 is alpha N-terminal domain (alpha-NTD); sequence MQGSARNFLK…EQLSSFVELE (232 aa). The interval 246–326 is alpha C-terminal domain (alpha-CTD); it reads FDPQLLAAVD…NWPPVDLMSE (81 aa).

It belongs to the RNA polymerase alpha chain family. Homodimer. The RNAP catalytic core consists of 2 alpha, 1 beta, 1 beta' and 1 omega subunit. When a sigma factor is associated with the core the holoenzyme is formed, which can initiate transcription.

It catalyses the reaction RNA(n) + a ribonucleoside 5'-triphosphate = RNA(n+1) + diphosphate. Functionally, DNA-dependent RNA polymerase catalyzes the transcription of DNA into RNA using the four ribonucleoside triphosphates as substrates. The polypeptide is DNA-directed RNA polymerase subunit alpha (Ruthia magnifica subsp. Calyptogena magnifica).